Reading from the N-terminus, the 305-residue chain is Peroxisome assembly protein 26 (305 aa).

Topologically, residues 1–246 (MKSDASTSAA…RRLWGSVVSH (246 aa)) are cytoplasmic. Residues 247–267 (LLSQPFRKGLLAALILCLLIL) form a helical; Signal-anchor for type II membrane protein membrane-spanning segment. At 268–305 (RFDPAAPSSLPFLYQLTQLFRRIQKATLSRLYPLALRD) the chain is on the peroxisomal matrix side.

Belongs to the peroxin-26 family. In terms of assembly, interacts (via its cytoplasmic domain) with PEX6; interaction is direct and is ATP-dependent. Interacts with PEX1; interaction is indirect and is mediated via interaction with PEX6.

It is found in the peroxisome membrane. In terms of biological role, peroxisomal docking factor that anchors PEX1 and PEX6 to peroxisome membranes. PEX26 is therefore required for the formation of the PEX1-PEX6 AAA ATPase complex, a complex that mediates the extraction of the PEX5 receptor from peroxisomal membrane. The polypeptide is Peroxisome assembly protein 26 (Mus musculus (Mouse)).